The sequence spans 453 residues: Bifunctional protein GlmU (453 aa).

Residues Met1–Arg227 are pyrophosphorylase. Residues Leu8–Gly11, Lys22, Gln73, Gly78–Thr79, Ser100–Asp102, Gly137, Glu152, Asn167, and Asn225 contribute to the UDP-N-acetyl-alpha-D-glucosamine site. Asp102 contacts Mg(2+). Asn225 contributes to the Mg(2+) binding site. Residues Gln228–Glu248 form a linker region. The segment at Gly249–Lys453 is N-acetyltransferase. Residues Arg331 and Lys349 each coordinate UDP-N-acetyl-alpha-D-glucosamine. Catalysis depends on His361, which acts as the Proton acceptor. Residues Tyr364 and Asn375 each contribute to the UDP-N-acetyl-alpha-D-glucosamine site. Acetyl-CoA contacts are provided by residues Ala378, Asn384–Tyr385, Ser403, Ala421, and Arg438. The segment at Pro430 to Lys453 is disordered.

This sequence in the N-terminal section; belongs to the N-acetylglucosamine-1-phosphate uridyltransferase family. In the C-terminal section; belongs to the transferase hexapeptide repeat family. Homotrimer. It depends on Mg(2+) as a cofactor.

The protein resides in the cytoplasm. The enzyme catalyses alpha-D-glucosamine 1-phosphate + acetyl-CoA = N-acetyl-alpha-D-glucosamine 1-phosphate + CoA + H(+). It carries out the reaction N-acetyl-alpha-D-glucosamine 1-phosphate + UTP + H(+) = UDP-N-acetyl-alpha-D-glucosamine + diphosphate. The protein operates within nucleotide-sugar biosynthesis; UDP-N-acetyl-alpha-D-glucosamine biosynthesis; N-acetyl-alpha-D-glucosamine 1-phosphate from alpha-D-glucosamine 6-phosphate (route II): step 2/2. It participates in nucleotide-sugar biosynthesis; UDP-N-acetyl-alpha-D-glucosamine biosynthesis; UDP-N-acetyl-alpha-D-glucosamine from N-acetyl-alpha-D-glucosamine 1-phosphate: step 1/1. It functions in the pathway bacterial outer membrane biogenesis; LPS lipid A biosynthesis. Catalyzes the last two sequential reactions in the de novo biosynthetic pathway for UDP-N-acetylglucosamine (UDP-GlcNAc). The C-terminal domain catalyzes the transfer of acetyl group from acetyl coenzyme A to glucosamine-1-phosphate (GlcN-1-P) to produce N-acetylglucosamine-1-phosphate (GlcNAc-1-P), which is converted into UDP-GlcNAc by the transfer of uridine 5-monophosphate (from uridine 5-triphosphate), a reaction catalyzed by the N-terminal domain. The polypeptide is Bifunctional protein GlmU (Nitrosococcus oceani (strain ATCC 19707 / BCRC 17464 / JCM 30415 / NCIMB 11848 / C-107)).